A 117-amino-acid chain; its full sequence is Prefoldin subunit beta (117 aa).

The protein belongs to the prefoldin subunit beta family. In terms of assembly, heterohexamer of two alpha and four beta subunits.

The protein localises to the cytoplasm. Functionally, molecular chaperone capable of stabilizing a range of proteins. Seems to fulfill an ATP-independent, HSP70-like function in archaeal de novo protein folding. This Pyrococcus horikoshii (strain ATCC 700860 / DSM 12428 / JCM 9974 / NBRC 100139 / OT-3) protein is Prefoldin subunit beta (pfdB).